A 352-amino-acid polypeptide reads, in one-letter code: tRNA N6-adenosine threonylcarbamoyltransferase (352 aa).

3 residues coordinate a divalent metal cation: histidine 114, histidine 118, and tyrosine 135. Substrate-binding positions include 135–139, aspartate 167, glycine 182, glutamate 186, and asparagine 283; that span reads YVSGG. Residue aspartate 311 participates in a divalent metal cation binding.

The protein belongs to the KAE1 / TsaD family. As to quaternary structure, component of the EKC/KEOPS complex composed of at least BUD32, CGI121, GON7, KAE1 and PCC1; the whole complex dimerizes. A divalent metal cation serves as cofactor.

Its subcellular location is the cytoplasm. It is found in the nucleus. It catalyses the reaction L-threonylcarbamoyladenylate + adenosine(37) in tRNA = N(6)-L-threonylcarbamoyladenosine(37) in tRNA + AMP + H(+). Component of the EKC/KEOPS complex that is required for the formation of a threonylcarbamoyl group on adenosine at position 37 (t(6)A37) in tRNAs that read codons beginning with adenine. The complex is probably involved in the transfer of the threonylcarbamoyl moiety of threonylcarbamoyl-AMP (TC-AMP) to the N6 group of A37. KAE1 likely plays a direct catalytic role in this reaction, but requires other protein(s) of the complex to fulfill this activity. The EKC/KEOPS complex also promotes both telomere uncapping and telomere elongation. The complex is required for efficient recruitment of transcriptional coactivators. The sequence is that of tRNA N6-adenosine threonylcarbamoyltransferase from Phaeosphaeria nodorum (strain SN15 / ATCC MYA-4574 / FGSC 10173) (Glume blotch fungus).